Consider the following 682-residue polypeptide: Nephrocystin-1-like protein (682 aa).

Residues 10-100 (LQDAINRFPQ…ALSPEKEQLS (91 aa)) are a coiled coil. The tract at residues 96–188 (KEQLSFSVSV…PLESKTLNER (93 aa)) is disordered. A compositionally biased stretch (acidic residues) spans 128–148 (NDDESEDSDNDSEIIETDVQL). One can recognise an SH3 domain in the interval 215 to 275 (VRGNVFVAID…PKTYLQHVKE (61 aa)).

Belongs to the nephrocystin-1 family. Expressed in ciliated sensory neurons of the head (amphid neurons) and the tail in hermaphrodites (phasmid neurons) and males (sensory ray neurons).

Its function is as follows. Plays a role in the extension of dendrites from phasmid ciliated sensory neurons. May be necessary for initial assembly of the cilium. This is Nephrocystin-1-like protein from Caenorhabditis elegans.